The chain runs to 802 residues: Ribosome-releasing factor 2, mitochondrial (802 aa).

Residues 13–297 enclose the tr-type G domain; the sequence is KKIRNIGIIA…AVVDFLPSPA (285 aa). Residues 22 to 29, 86 to 90, and 140 to 143 contribute to the GTP site; these read AHIDAGKT, DTPGH, and NKMD.

The protein belongs to the TRAFAC class translation factor GTPase superfamily. Classic translation factor GTPase family. EF-G/EF-2 subfamily.

Its subcellular location is the mitochondrion. Mitochondrial GTPase that mediates the disassembly of ribosomes from messenger RNA at the termination of mitochondrial protein biosynthesis. Not involved in the GTP-dependent ribosomal translocation step during translation elongation. This Yarrowia lipolytica (strain CLIB 122 / E 150) (Yeast) protein is Ribosome-releasing factor 2, mitochondrial.